The following is a 275-amino-acid chain: Phosphate import ATP-binding protein PstB 3 (275 aa).

The disordered stretch occupies residues 1–26 (MATQETDDSLISTDVQTDATERGDQP). Residues 9–18 (SLISTDVQTD) are compositionally biased toward polar residues. The region spanning 31-270 (VETKHLDVHY…PEDDRVEDYI (240 aa)) is the ABC transporter domain. An ATP-binding site is contributed by 63 to 70 (GPSGCGKS).

It belongs to the ABC transporter superfamily. Phosphate importer (TC 3.A.1.7) family. The complex is composed of two ATP-binding proteins (PstB), two transmembrane proteins (PstC and PstA) and a solute-binding protein (PstS).

The protein resides in the cell membrane. The catalysed reaction is phosphate(out) + ATP + H2O = ADP + 2 phosphate(in) + H(+). Part of the ABC transporter complex PstSACB involved in phosphate import. Responsible for energy coupling to the transport system. The chain is Phosphate import ATP-binding protein PstB 3 from Natronomonas pharaonis (strain ATCC 35678 / DSM 2160 / CIP 103997 / JCM 8858 / NBRC 14720 / NCIMB 2260 / Gabara) (Halobacterium pharaonis).